Consider the following 235-residue polypeptide: Small ribosomal subunit protein uS2 (235 aa).

This sequence belongs to the universal ribosomal protein uS2 family.

The polypeptide is Small ribosomal subunit protein uS2 (Caldanaerobacter subterraneus subsp. tengcongensis (strain DSM 15242 / JCM 11007 / NBRC 100824 / MB4) (Thermoanaerobacter tengcongensis)).